The following is a 309-amino-acid chain: Probable ABC transporter permease protein y4oQ (309 aa).

Transmembrane regions (helical) follow at residues 25–45 (VVWF…VPLV), 89–109 (LIYA…FAVL), 123–143 (LMLI…KLLY), 174–194 (VIIV…LAGL), 221–241 (LPHL…GVMA), 246–266 (IFLL…VYAY), and 278–298 (TTAI…PLIW). An ABC transmembrane type-1 domain is found at 85–296 (IRVTLIYAVV…VFVLAISAPL (212 aa)).

It belongs to the binding-protein-dependent transport system permease family. MalFG subfamily.

Its subcellular location is the cell inner membrane. Its function is as follows. Probably part of the binding-protein-dependent transport system y4oPQRS. This system probably transports a sugar-like molecule. Probably responsible for the translocation of the substrate across the membrane. In Sinorhizobium fredii (strain NBRC 101917 / NGR234), this protein is Probable ABC transporter permease protein y4oQ.